The sequence spans 598 residues: Centrosomal protein of 70 kDa (598 aa).

Positions 16 to 38 (DSTKEPLSTVTSQAQDSSLSANR) are enriched in polar residues. The disordered stretch occupies residues 16 to 43 (DSTKEPLSTVTSQAQDSSLSANRPVTEK). 2 coiled-coil regions span residues 99–210 (TRQQ…EEDR) and 255–317 (TYKG…NIKL). Residues 484 to 517 (NGVYPRMNEVYARLGEMNNAVRNLQELLGLDSSS) form a TPR repeat.

As to quaternary structure, directly interacts with tubulin-gamma; this interaction determines centrosomal localization.

The protein resides in the cytoplasm. The protein localises to the cytoskeleton. It localises to the microtubule organizing center. Its subcellular location is the centrosome. Functionally, plays a role in the organization of both preexisting and nascent microtubules in interphase cells. During mitosis, required for the organization and orientation of the mitotic spindle. The protein is Centrosomal protein of 70 kDa (Cep70) of Rattus norvegicus (Rat).